Here is a 371-residue protein sequence, read N- to C-terminus: Photosynthetic reaction center cytochrome c subunit (371 aa).

M114, C127, C130, H131, M153, H167, C178, C181, H182, M267, C278, C281, H282, C339, C342, and H343 together coordinate heme.

As to quaternary structure, component of the photosynthetic reaction center composed of protein subunits L (PufL), M (PufM), H (PuhA) and cytochrome C (PufC). The reaction center interacts with light-harvesting antenna complex LH1. Binds 4 heme groups per subunit.

It is found in the cellular chromatophore membrane. In terms of biological role, the reaction center of purple bacteria contains a tightly bound cytochrome molecule which re-reduces the photo oxidized primary electron donor. The polypeptide is Photosynthetic reaction center cytochrome c subunit (pufC) (Roseobacter denitrificans (strain ATCC 33942 / OCh 114) (Erythrobacter sp. (strain OCh 114))).